The following is a 204-amino-acid chain: Methylthioribulose-1-phosphate dehydratase (204 aa).

Zn(2+) is bound by residues histidine 94 and histidine 96.

This sequence belongs to the aldolase class II family. MtnB subfamily. Zn(2+) is required as a cofactor.

The catalysed reaction is 5-(methylsulfanyl)-D-ribulose 1-phosphate = 5-methylsulfanyl-2,3-dioxopentyl phosphate + H2O. It participates in amino-acid biosynthesis; L-methionine biosynthesis via salvage pathway; L-methionine from S-methyl-5-thio-alpha-D-ribose 1-phosphate: step 2/6. Functionally, catalyzes the dehydration of methylthioribulose-1-phosphate (MTRu-1-P) into 2,3-diketo-5-methylthiopentyl-1-phosphate (DK-MTP-1-P). In Pseudomonas savastanoi pv. phaseolicola (strain 1448A / Race 6) (Pseudomonas syringae pv. phaseolicola (strain 1448A / Race 6)), this protein is Methylthioribulose-1-phosphate dehydratase.